Consider the following 282-residue polypeptide: Deoxyribonuclease-1 (282 aa).

The N-terminal stretch at 1-22 is a signal peptide; sequence MRGARLTGALLALAGLLQVALS. A glycan (N-linked (GlcNAc...) asparagine) is linked at Asn40. Residue Glu100 is part of the active site. Cys123 and Cys126 are disulfide-bonded. N-linked (GlcNAc...) asparagine glycosylation occurs at Asn128. His156 is a catalytic residue. Cys195 and Cys231 are disulfide-bonded.

It belongs to the DNase I family. Ca(2+) serves as cofactor. Mg(2+) is required as a cofactor.

It localises to the secreted. It is found in the zymogen granule. The protein localises to the nucleus envelope. The enzyme catalyses Endonucleolytic cleavage to 5'-phosphodinucleotide and 5'-phosphooligonucleotide end-products.. In terms of biological role, serum endocuclease secreted into body fluids by a wide variety of exocrine and endocrine organs. Expressed by non-hematopoietic tissues and preferentially cleaves protein-free DNA. Among other functions, seems to be involved in cell death by apoptosis. Binds specifically to G-actin and blocks actin polymerization. Together with DNASE1L3, plays a key role in degrading neutrophil extracellular traps (NETs). NETs are mainly composed of DNA fibers and are released by neutrophils to bind pathogens during inflammation. Degradation of intravascular NETs by DNASE1 and DNASE1L3 is required to prevent formation of clots that obstruct blood vessels and cause organ damage following inflammation. This Equus caballus (Horse) protein is Deoxyribonuclease-1 (DNASE1).